We begin with the raw amino-acid sequence, 290 residues long: Small ribosomal subunit biogenesis GTPase RsgA (290 aa).

Positions 62–213 constitute a CP-type G domain; that stretch reads KNSLVRPPIV…IADTPGFSSL (152 aa). GTP contacts are provided by residues 111-114 and 156-164; these read SKMD and GQTGVGKST. Cys-237, Cys-242, His-244, and Cys-250 together coordinate Zn(2+).

This sequence belongs to the TRAFAC class YlqF/YawG GTPase family. RsgA subfamily. Monomer. Associates with 30S ribosomal subunit, binds 16S rRNA. Requires Zn(2+) as cofactor.

It localises to the cytoplasm. Its function is as follows. One of several proteins that assist in the late maturation steps of the functional core of the 30S ribosomal subunit. Helps release RbfA from mature subunits. May play a role in the assembly of ribosomal proteins into the subunit. Circularly permuted GTPase that catalyzes slow GTP hydrolysis, GTPase activity is stimulated by the 30S ribosomal subunit. The chain is Small ribosomal subunit biogenesis GTPase RsgA from Streptococcus pyogenes serotype M3 (strain ATCC BAA-595 / MGAS315).